We begin with the raw amino-acid sequence, 302 residues long: Heme A synthase (302 aa).

Residues 1-8 (MFRKQNLK) are Cytoplasmic-facing. Residues 9 to 29 (WLGVLATIIMTFVQLGGALVT) form a helical membrane-spanning segment. Over 30–67 (KTGSEDGCGSSWPLCNGALLPENLPIQTIIELSHRAVS) the chain is Extracellular. C37 and C44 are joined by a disulfide. E60 is an active-site residue. H63 lines the heme o pocket. The helical transmembrane segment at 68 to 88 (AISLIVVLWLVITAWKNIGYI) threads the bilayer. Over 89 to 93 (KEIKP) the chain is Cytoplasmic. A helical membrane pass occupies residues 94 to 114 (LSIISVGFLLVQALVGAAAVI). The Extracellular segment spans residues 115–125 (WQQNPYVLALH). Position 125 (H125) interacts with heme o. A helical membrane pass occupies residues 126–146 (FGISLISFSSVFLMTLIIFSI). Over 147–161 (DKKYEADILFIHKPL) the chain is Cytoplasmic. Residues 162 to 182 (RILTWLMAIIVYLTIYTGALV) form a helical membrane-spanning segment. At 183–215 (RHTKSSLAYGAWPIPFDDIVPHNAHDWVQFSHR) the chain is on the extracellular side. H214 is a heme b binding site. A helical transmembrane segment spans residues 216–236 (GMAFITFIWIMITFIHAIKNY). Over 237–244 (SDNRTVRY) the chain is Cytoplasmic. Residues 245 to 265 (GYTASFILVILQVITGALSVI) form a helical membrane-spanning segment. The Extracellular segment spans residues 266–270 (TNVNL). The chain crosses the membrane as a helical span at residues 271–291 (IIALFHALFITYLFGMIAYFI). H276 serves as a coordination point for heme b. Topologically, residues 292-302 (LLMLRTTRSLK) are cytoplasmic.

This sequence belongs to the COX15/CtaA family. Type 1 subfamily. In terms of assembly, interacts with CtaB. The cofactor is heme b.

It localises to the cell membrane. It catalyses the reaction Fe(II)-heme o + 2 A + H2O = Fe(II)-heme a + 2 AH2. The protein operates within porphyrin-containing compound metabolism; heme A biosynthesis; heme A from heme O: step 1/1. Catalyzes the conversion of heme O to heme A by two successive hydroxylations of the methyl group at C8. The first hydroxylation forms heme I, the second hydroxylation results in an unstable dihydroxymethyl group, which spontaneously dehydrates, resulting in the formyl group of heme A. The sequence is that of Heme A synthase from Staphylococcus epidermidis (strain ATCC 12228 / FDA PCI 1200).